Reading from the N-terminus, the 195-residue chain is Myelin-associated neurite-outgrowth inhibitor (195 aa).

Methionine 1 bears the N-acetylmethionine mark. Over 1 to 18 (MNPVYSPGSSGVPYANAK) the chain is Cytoplasmic. A Phosphoserine modification is found at serine 6. A helical transmembrane segment spans residues 19–42 (GIGYPAGFPMGYAAAAPAYSPNMY). Topologically, residues 43–142 (PGANPTFQAG…PAPLPPPRGN (100 aa)) are extracellular. N-linked (GlcNAc...) asparagine glycosylation occurs at asparagine 46. The chain crosses the membrane as a helical span at residues 143 to 164 (GVTMGMVAGTTMAMSAGTLLTA). Over 165–195 (HSPTPVAPHPVTVPTYRAPGTPTYSYVPPQW) the chain is Cytoplasmic.

The protein belongs to the FAM168 family. As to quaternary structure, may form homodimers. May interact with DAZAP2, FAM168A, PRDX6, RBM6, TMTC1 and YPEL2. Interacts with CDC27. Post-translationally, N-glycosylated.

It is found in the cytoplasm. It localises to the perinuclear region. The protein localises to the cell membrane. The protein resides in the cell projection. Its subcellular location is the axon. Functionally, inhibitor of neuronal axonal outgrowth. Acts as a negative regulator of CDC42 and STAT3 and a positive regulator of STMN2. Positive regulator of CDC27. This is Myelin-associated neurite-outgrowth inhibitor (FAM168B) from Bos taurus (Bovine).